Consider the following 205-residue polypeptide: MNCRVKICGITNLDDAMVACRYGADALGFVFYEKSPRYVAPDMANAIVAQLPPFIIPVALFVDADTSLVNSVISGSSRWTIQFHGSESESECISYQRPYIKALRIQRGDDVAALVDQYPSASAMLLDAYKAGVPGGTGEVFDWSLIPIGLSKPIVLAGGLTPSNVKQAIKQVKPYAVDVSGGVELSKGIKSEPLVQEFISGAKCG.

It belongs to the TrpF family.

The enzyme catalyses N-(5-phospho-beta-D-ribosyl)anthranilate = 1-(2-carboxyphenylamino)-1-deoxy-D-ribulose 5-phosphate. It participates in amino-acid biosynthesis; L-tryptophan biosynthesis; L-tryptophan from chorismate: step 3/5. The chain is N-(5'-phosphoribosyl)anthranilate isomerase from Marinomonas sp. (strain MWYL1).